The following is a 309-amino-acid chain: Olfactory receptor 5H17 (309 aa).

Topologically, residues 1 to 28 (MEKKNETLWTEFVLTGLTCLPQWKPLLF) are extracellular. The N-linked (GlcNAc...) asparagine glycan is linked to asparagine 5. Residues 29 to 49 (LVFLVIYFMTIVGNLGLITLI) form a helical membrane-spanning segment. Over 50–56 (WNDPHLH) the chain is Cytoplasmic. The helical transmembrane segment at 57–77 (IPMYLFLSNLAFVDTWLSSTV) threads the bilayer. Over 78–93 (TPRMLFNLLDKGKVIS) the chain is Extracellular. Residues 94 to 114 (VAECKTQFFSFAISVTTECFL) traverse the membrane as a helical segment. Cysteine 97 and cysteine 189 are joined by a disulfide. Residues 115–144 (LAAMAYDRYAAICNPLLYPVIMTNRLCVRL) lie on the Cytoplasmic side of the membrane. The chain crosses the membrane as a helical span at residues 145–165 (LALSFIGGFLHAVIHESFLSR). Residues 166–198 (LTFCNSNIIYHFYCDVIPLLKISCTDPSLNYLI) are Extracellular-facing. A helical transmembrane segment spans residues 199–219 (IFIFSGSIQVFTIMTVLISYT). The Cytoplasmic segment spans residues 220–239 (FVLFTILKKKSDKGIRKAFS). Residues 240–260 (TCGAHLLSVSLYYGPLLFMYV) form a helical membrane-spanning segment. Residues 261-271 (HPASSEVDDQD) lie on the Extracellular side of the membrane. The chain crosses the membrane as a helical span at residues 272 to 292 (MILSLFYTVIIPVLNPIIYSL). Residues 293-309 (RNKQVIDSLKKMLKMMV) are Cytoplasmic-facing.

It belongs to the G-protein coupled receptor 1 family.

It localises to the cell membrane. Its function is as follows. Potential odorant receptor. In Mus musculus (Mouse), this protein is Olfactory receptor 5H17.